The chain runs to 302 residues: Oxygen-dependent coproporphyrinogen-III oxidase (302 aa).

S94 provides a ligand contact to substrate. A divalent metal cation contacts are provided by H98 and H108. The active-site Proton donor is the H108. 110–112 (NVR) provides a ligand contact to substrate. Residues H147 and H177 each coordinate a divalent metal cation. Positions 242–277 (YVEFNLVYDRGTLFGLQTGGRTESILMSMPPLARWE) are important for dimerization. 260 to 262 (GGR) lines the substrate pocket.

It belongs to the aerobic coproporphyrinogen-III oxidase family. In terms of assembly, homodimer. A divalent metal cation serves as cofactor.

It is found in the cytoplasm. It catalyses the reaction coproporphyrinogen III + O2 + 2 H(+) = protoporphyrinogen IX + 2 CO2 + 2 H2O. Its pathway is porphyrin-containing compound metabolism; protoporphyrin-IX biosynthesis; protoporphyrinogen-IX from coproporphyrinogen-III (O2 route): step 1/1. In terms of biological role, involved in the heme biosynthesis. Catalyzes the aerobic oxidative decarboxylation of propionate groups of rings A and B of coproporphyrinogen-III to yield the vinyl groups in protoporphyrinogen-IX. The polypeptide is Oxygen-dependent coproporphyrinogen-III oxidase (Aeromonas salmonicida (strain A449)).